The sequence spans 620 residues: Sodium-dependent dopamine transporter (620 aa).

Topologically, residues 1-56 (MSKSKCSVGLMSSVVAPAKEPNAVGPKEVELILVKEQNGVQLTSSTLTNPRQSPVE) are cytoplasmic. The chain crosses the membrane as a discontinuously helical span at residues 57 to 95 (AQDRETWGKKIDFLLSVIGFAVDLANVWRFPYLCYKNGG). Positions 75, 77, 78, 79, and 82 each coordinate Na(+). Dopamine is bound at residue Asp79. Helical transmembrane passes span 96 to 127 (GAFL…NREG) and 128 to 171 (AAGV…FSSF). The dopamine site is built by Ser149 and Gly153. The Extracellular portion of the chain corresponds to 172-236 (TTELPWIHCN…SHGIDDLGPP (65 aa)). Cys180 and Cys189 are disulfide-bonded. 3 N-linked (GlcNAc...) asparagine glycosylation sites follow: Asn181, Asn188, and Asn205. The next 2 membrane-spanning stretches (helical) occupy residues 237–256 (RWQL…FSLW) and 257–287 (KGVK…GVTL). Over 288–306 (PGAIDGIRAYLSVDFYRLC) the chain is Extracellular. Residues 307–335 (EASVWIDAATQVCFSLGVGFGVLIAFSSY) traverse the membrane as a discontinuously helical segment. Gln317 contacts chloride. Phe320 lines the dopamine pocket. The Na(+) site is built by Ser321 and Asn353. Ser321 lines the chloride pocket. A helical membrane pass occupies residues 336 to 376 (NKFTNNCYRDAIVTTSINSLTSFSSGFVVFSFLGYMAQKHS). Residue Ser357 participates in chloride binding. Residues 377-400 (VPIGDVAKDGPGLIFIIYPEAIAT) lie on the Extracellular side of the membrane. The next 3 helical transmembrane spans lie at 401–442 (LPLS…QLLH), 443–466 (RHRE…CVTN), and 467–499 (GGIY…AWFY). The Na(+) site is built by Leu418, Asp421, and Ser422. Positions 422 and 423 each coordinate dopamine. Topologically, residues 500-516 (GVGQFSDDIQQMTGQRP) are cytoplasmic. The helical transmembrane segment at 517–542 (SLYWRLCWKLVSPCFLLFVVVVSIVT) threads the bilayer. At 543-553 (FRPPHYGAYIF) the chain is on the extracellular side. Residues 554–583 (PDWANALGWVIATSSMAMVPIYAAYKFCSL) form a helical membrane-spanning segment. Positions 561–590 (GWVIATSSMAMVPIYAAYKFCSLPGSFREK) are interaction with TGFB1I1. Over 584-620 (PGSFREKLAYAIAPEKDRELVDRGEVRQFTLRHWLKV) the chain is Cytoplasmic.

The protein belongs to the sodium:neurotransmitter symporter (SNF) (TC 2.A.22) family. SLC6A3 subfamily. As to quaternary structure, monomer. Homooligomer; disulfide-linked. Interacts with PRKCABP and TGFB1I1. Interacts (via N-terminus) with SYNGR3 (via N-terminus). Interacts with SLC18A2. Interacts with TOR1A (ATP-bound); TOR1A regulates SLC6A3 subcellular location. Interacts with alpha-synuclein/SNCA. Interacts with SEPTIN4. Highly expressed in substantia nigra. Expressed in axonal varicosities in dopaminergic nerve terminals (at protein level). Expressed in the striatum (at protein level).

Its subcellular location is the cell membrane. It is found in the cell projection. It localises to the neuron projection. The protein localises to the axon. The catalysed reaction is dopamine(out) + chloride(out) + Na(+)(out) = dopamine(in) + chloride(in) + Na(+)(in). It catalyses the reaction dopamine(out) + chloride(out) + 2 Na(+)(out) = dopamine(in) + chloride(in) + 2 Na(+)(in). The enzyme catalyses (R)-noradrenaline(out) + chloride(out) + Na(+)(out) = (R)-noradrenaline(in) + chloride(in) + Na(+)(in). Inhibited by cocaine, which occupies the same binding site as dopamine. Inhibited by zinc ions. Enhanced by the antibiotic valinomycin. Inhibited by benztropine. Inhibited by GBR 12909 dihydrochloride and amphetamine. Inhibited by mazindol, GBR 12783 dihydrochloride, nomifensine, diclofensine, amfonelic acid, Lu 19005, Win-35428, bupropion and ritalin. In terms of biological role, mediates sodium- and chloride-dependent transport of dopamine. Also mediates sodium- and chloride-dependent transport of norepinephrine (also known as noradrenaline). Regulator of light-dependent retinal hyaloid vessel regression, downstream of OPN5 signaling. The chain is Sodium-dependent dopamine transporter (SLC6A3) from Homo sapiens (Human).